The chain runs to 31 residues: Cytochrome b6-f complex subunit 6 (31 aa).

A helical transmembrane segment spans residues 4-26; it reads ITSYFGFLLAASTITPALLIGLN.

The protein belongs to the PetL family. As to quaternary structure, the 4 large subunits of the cytochrome b6-f complex are cytochrome b6, subunit IV (17 kDa polypeptide, PetD), cytochrome f and the Rieske protein, while the 4 small subunits are PetG, PetL, PetM and PetN. The complex functions as a dimer.

The protein resides in the plastid. It localises to the chloroplast thylakoid membrane. Functionally, component of the cytochrome b6-f complex, which mediates electron transfer between photosystem II (PSII) and photosystem I (PSI), cyclic electron flow around PSI, and state transitions. PetL is important for photoautotrophic growth as well as for electron transfer efficiency and stability of the cytochrome b6-f complex. This chain is Cytochrome b6-f complex subunit 6, found in Calycanthus floridus var. glaucus (Eastern sweetshrub).